Reading from the N-terminus, the 347-residue chain is Anthranilate phosphoribosyltransferase (347 aa).

5-phospho-alpha-D-ribose 1-diphosphate-binding positions include G86, 89 to 90, T94, 96 to 99, 114 to 122, and S126; these read GD, NIST, and KHGNRSVSS. G86 is an anthranilate binding site. S98 contacts Mg(2+). Residue N117 coordinates anthranilate. Anthranilate is bound at residue R172. The Mg(2+) site is built by D230 and E231.

It belongs to the anthranilate phosphoribosyltransferase family. Homodimer. Requires Mg(2+) as cofactor.

The enzyme catalyses N-(5-phospho-beta-D-ribosyl)anthranilate + diphosphate = 5-phospho-alpha-D-ribose 1-diphosphate + anthranilate. It participates in amino-acid biosynthesis; L-tryptophan biosynthesis; L-tryptophan from chorismate: step 2/5. Its function is as follows. Catalyzes the transfer of the phosphoribosyl group of 5-phosphorylribose-1-pyrophosphate (PRPP) to anthranilate to yield N-(5'-phosphoribosyl)-anthranilate (PRA). This is Anthranilate phosphoribosyltransferase from Shewanella frigidimarina (strain NCIMB 400).